The primary structure comprises 90 residues: DNA-directed RNA polymerase subunit Rpo5 (90 aa).

This sequence belongs to the archaeal Rpo5/eukaryotic RPB5 RNA polymerase subunit family. As to quaternary structure, part of the RNA polymerase complex.

The protein localises to the cytoplasm. It carries out the reaction RNA(n) + a ribonucleoside 5'-triphosphate = RNA(n+1) + diphosphate. Its function is as follows. DNA-dependent RNA polymerase (RNAP) catalyzes the transcription of DNA into RNA using the four ribonucleoside triphosphates as substrates. The chain is DNA-directed RNA polymerase subunit Rpo5 from Aeropyrum pernix (strain ATCC 700893 / DSM 11879 / JCM 9820 / NBRC 100138 / K1).